A 172-amino-acid polypeptide reads, in one-letter code: Large ribosomal subunit protein eL20A (172 aa).

Phosphoserine is present on serine 32. Residues lysine 125, lysine 131, and lysine 149 each participate in a glycyl lysine isopeptide (Lys-Gly) (interchain with G-Cter in ubiquitin) cross-link.

Belongs to the eukaryotic ribosomal protein eL20 family. Component of the large ribosomal subunit (LSU). Mature yeast ribosomes consist of a small (40S) and a large (60S) subunit. The 40S small subunit contains 1 molecule of ribosomal RNA (18S rRNA) and 33 different proteins (encoded by 57 genes). The large 60S subunit contains 3 rRNA molecules (25S, 5.8S and 5S rRNA) and 46 different proteins (encoded by 81 genes). eL20 forms multiple interactions with RNA and proteins in the central protuberance, connecting components of core functional centers that are located far apart.

Its subcellular location is the cytoplasm. Component of the ribosome, a large ribonucleoprotein complex responsible for the synthesis of proteins in the cell. The small ribosomal subunit (SSU) binds messenger RNAs (mRNAs) and translates the encoded message by selecting cognate aminoacyl-transfer RNA (tRNA) molecules. The large subunit (LSU) contains the ribosomal catalytic site termed the peptidyl transferase center (PTC), which catalyzes the formation of peptide bonds, thereby polymerizing the amino acids delivered by tRNAs into a polypeptide chain. The nascent polypeptides leave the ribosome through a tunnel in the LSU and interact with protein factors that function in enzymatic processing, targeting, and the membrane insertion of nascent chains at the exit of the ribosomal tunnel. The protein is Large ribosomal subunit protein eL20A of Saccharomyces cerevisiae (strain ATCC 204508 / S288c) (Baker's yeast).